The primary structure comprises 905 residues: Translation initiation factor IF-2 (905 aa).

Over residues 50 to 62 the composition is skewed to basic and acidic residues; that stretch reads HYEAKGGEDKAAE. The disordered stretch occupies residues 50-306; sequence HYEAKGGEDK…QKHEVGGVRL (257 aa). Positions 63–75 are enriched in low complexity; that stretch reads KNAPAATPASASK. The segment covering 89-125 has biased composition (pro residues); sequence GPKPSAAPKPGAAPKPGGAPKPGGAPKPGATPKPGGA. Over residues 161–171 the composition is skewed to low complexity; the sequence is PFSTGSSSDRP. Residues 233–276 show a composition bias toward gly residues; that stretch reads GSGGGGRGRGGRGGGPGHGGPGHGGFRGRGGRRGGTAGAFGRPG. Basic residues predominate over residues 280–290; that stretch reads RRGKKSKRQKR. Residues 291-302 show a composition bias toward basic and acidic residues; that stretch reads HEFEEQQKHEVG. The tr-type G domain maps to 401–575; the sequence is KRPPVVTVMG…LTADAALELT (175 aa). Residues 410-417 are G1; the sequence is GHVDHGKT. Residue 410–417 participates in GTP binding; sequence GHVDHGKT. Residues 435–439 form a G2 region; that stretch reads GITQG. Positions 460-463 are G3; sequence DTPG. GTP contacts are provided by residues 460–464 and 514–517; these read DTPGH and NKID. A G4 region spans residues 514-517; that stretch reads NKID. A G5 region spans residues 550-552; sequence SAK.

The protein belongs to the TRAFAC class translation factor GTPase superfamily. Classic translation factor GTPase family. IF-2 subfamily.

It localises to the cytoplasm. Functionally, one of the essential components for the initiation of protein synthesis. Protects formylmethionyl-tRNA from spontaneous hydrolysis and promotes its binding to the 30S ribosomal subunits. Also involved in the hydrolysis of GTP during the formation of the 70S ribosomal complex. The chain is Translation initiation factor IF-2 from Corynebacterium aurimucosum (strain ATCC 700975 / DSM 44827 / CIP 107346 / CN-1) (Corynebacterium nigricans).